Consider the following 291-residue polypeptide: Bifunctional protein FolD (291 aa).

NADP(+)-binding positions include 168-170, Thr195, and Val236; that span reads GRG.

This sequence belongs to the tetrahydrofolate dehydrogenase/cyclohydrolase family. Homodimer.

The enzyme catalyses (6R)-5,10-methylene-5,6,7,8-tetrahydrofolate + NADP(+) = (6R)-5,10-methenyltetrahydrofolate + NADPH. It carries out the reaction (6R)-5,10-methenyltetrahydrofolate + H2O = (6R)-10-formyltetrahydrofolate + H(+). It functions in the pathway one-carbon metabolism; tetrahydrofolate interconversion. In terms of biological role, catalyzes the oxidation of 5,10-methylenetetrahydrofolate to 5,10-methenyltetrahydrofolate and then the hydrolysis of 5,10-methenyltetrahydrofolate to 10-formyltetrahydrofolate. The protein is Bifunctional protein FolD of Bifidobacterium longum (strain DJO10A).